The primary structure comprises 384 residues: V-type proton ATPase subunit C (384 aa).

The protein belongs to the V-ATPase C subunit family. In terms of assembly, V-ATPase is a heteromultimeric enzyme made up of two complexes: the ATP-hydrolytic V1 complex and the proton translocation V0 complex. The V1 complex consists of three catalytic AB heterodimers that form a heterohexamer, three peripheral stalks each consisting of EG heterodimers, one central rotor including subunits D and F, and the regulatory subunits C and H. The proton translocation complex V0 consists of the proton transport subunit a, a ring of proteolipid subunits c9c'', rotary subunit d, subunits e and f, and the accessory subunits vah-19/Ac45 and vah-20/PRR. Interacts with V-type proton ATPase subunits a1 unc-32, a2 vha-5 and a3 vha-6. Expressed ubiquitously; higher levels are found in gastrointestinal and hypodermal cells, as well as H-shaped excretory cell.

It is found in the cytoplasm. The protein localises to the membrane. Functionally, subunit of the V1 complex of vacuolar(H+)-ATPase (V-ATPase), a multisubunit enzyme composed of a peripheral complex (V1) that hydrolyzes ATP and a membrane integral complex (V0) that translocates protons. V-ATPase is responsible for acidifying and maintaining the pH of intracellular compartments and in some cell types, is targeted to the plasma membrane, where it is responsible for acidifying the extracellular environment. Subunit C is necessary for the assembly of the catalytic sector of the enzyme and is likely to have a specific function in its catalytic activity. Has roles in embryogenesis and ovulation. The chain is V-type proton ATPase subunit C from Caenorhabditis elegans.